A 243-amino-acid chain; its full sequence is uncharacterized protein (243 aa).

This sequence belongs to the mycobacterial PPE family.

The protein resides in the cell membrane. This is an uncharacterized protein from Mycobacterium tuberculosis (strain CDC 1551 / Oshkosh).